Reading from the N-terminus, the 337-residue chain is Large ribosomal subunit protein uL10 (337 aa).

Residues 309 to 337 (EEVVEEQEEVKEEEEEESDMASGLGALFG) form a disordered region. Residues 310–327 (EVVEEQEEVKEEEEEESD) are compositionally biased toward acidic residues.

Belongs to the universal ribosomal protein uL10 family. As to quaternary structure, part of the 50S ribosomal subunit. Forms part of the ribosomal stalk which helps the ribosome interact with GTP-bound translation factors. Forms a heptameric L10(L12)2(L12)2(L12)2 complex, where L10 forms an elongated spine to which the L12 dimers bind in a sequential fashion.

Functionally, forms part of the ribosomal stalk, playing a central role in the interaction of the ribosome with GTP-bound translation factors. In Methanococcoides burtonii (strain DSM 6242 / NBRC 107633 / OCM 468 / ACE-M), this protein is Large ribosomal subunit protein uL10.